The following is a 172-amino-acid chain: MKKVIAIDMDQVLADLLSDWVAYINTYDDPFLKEKDILCWDIKKYTNTNNNVYRHLDYDLFRNLNVIEGSQRVTKELMKKYEVYVVTTATNHPDSLKAKLEWLTEYFPFIPHSNVVLCGNKNIIKADIMIDDGIHNLESFEGMKILFDAPHNRNENRFIRVMNWEEIERKLL.

Residue D8 is the Nucleophile of the active site. Mg(2+)-binding residues include D8, D10, and D132. D10 acts as the Proton donor in catalysis.

It belongs to the 5'(3')-deoxyribonucleotidase family. Requires Mg(2+) as cofactor.

Its function is as follows. Dephosphorylates nucleoside monophosphates such as the 5' and 2'(3')-phosphates of deoxyribonucleotides in vitro. Also catalyzes the dephosphorylation of coenzyme A (CoA), pyridoxal-5'-phosphate (PLP), riboflavine-5-phosphate (FMN) and nicotinamide adenine dinucleotide phosphate (NADP) in vitro. The sequence is that of 5'(3')-deoxyribonucleotidase (yorS) from Bacillus subtilis (strain 168).